The sequence spans 441 residues: MIIPSLEELDSLKYSDLQNLAKSLGLRANLRATKLLKALKGYIKHEARKGNENQDESQTSASSCDETEIQISNQEEAERQPLGHVTKTRRRCKTVRVDPDSQQNHSEIKISNPTEFQNHEKQESQDLRATAKVPSPPDEHQEAENAVSSGNRDSKVPSEGKKSLYTDESSKPGKNKRTAITTPNFKKLHEAHFKEMESIDQYIERKKKHFEEHNSMNELKQQPINKGGVRTPVPPRGRLSVASTPISQRRSQGRSCGPASQSTLGLKGSLKRSAISAAKTGVRFSAATKDNEHKRSLTKTPARKSAHVTVSGGTPKGEAVLGTHKLKTITGNSAAVITPFKLTTEATQTPVSNKKPVFDLKASLSRPLNYEPHKGKLKPWGQSKENNYLNQHVNRINFYKKTYKQPHLQTKEEQRKKREQERKEKKAKVLGMRRGLILAED.

Disordered stretches follow at residues 47–186 (ARKG…PNFK) and 216–267 (MNEL…LGLK). Polar residues-rich tracts occupy residues 56–74 (ESQT…ISNQ) and 100–116 (DSQQ…PTEF). Positions 117–126 (QNHEKQESQD) are enriched in basic and acidic residues. Phosphoserine; by ATM is present on S124. Phosphoserine is present on S135. Basic and acidic residues predominate over residues 152–171 (RDSKVPSEGKKSLYTDESSK). The residue at position 182 (T182) is a Phosphothreonine. Residues 237–382 (GRLSVASTPI…HKGKLKPWGQ (146 aa)) are interaction with microtubules. Phosphoserine is present on S240. Over residues 241 to 264 (VASTPISQRRSQGRSCGPASQSTL) the composition is skewed to polar residues. Position 244 is a phosphothreonine (T244). S247, S255, S269, S276, and S311 each carry phosphoserine. Residues 286–319 (AATKDNEHKRSLTKTPARKSAHVTVSGGTPKGEA) are disordered. T314, T338, and T349 each carry phosphothreonine. 2 positions are modified to phosphoserine: S352 and S363. Residues 384-390 (KENNYLN) carry the KEN box motif. The segment at 401–427 (KTYKQPHLQTKEEQRKKREQERKEKKA) is disordered. Positions 407–432 (HLQTKEEQRKKREQERKEKKAKVLGM) form a coiled coil. Over residues 409-424 (QTKEEQRKKREQERKE) the composition is skewed to basic and acidic residues. K411 is modified (N6-acetyllysine).

Belongs to the NUSAP family. In terms of assembly, interacts with DNA and microtubules. Microtubule bundling is inhibited by IPO7, KPNA2 and KPNB1 while association with DNA is also inhibited by IPO7 and KPNA2. Ubiquitinated. Ubiquitination by FZR1 may lead to proteasome-dependent degradation of this protein. Post-translationally, phosphorylation by ATM in G2/M-phase induces mitotic arrest.

It localises to the cytoplasm. It is found in the nucleus. Its subcellular location is the nucleolus. The protein localises to the cytoskeleton. The protein resides in the spindle. It localises to the chromosome. Microtubule-associated protein with the capacity to bundle and stabilize microtubules. May associate with chromosomes and promote the organization of mitotic spindle microtubules around them. This chain is Nucleolar and spindle-associated protein 1 (NUSAP1), found in Homo sapiens (Human).